The chain runs to 113 residues: Probable UPF0122 protein (113 aa).

Belongs to the UPF0122 family.

Might take part in the signal recognition particle (SRP) pathway. This is inferred from the conservation of its genetic proximity to ftsY/ffh. May be a regulatory protein. In Mycoplasma mycoides, this protein is Probable UPF0122 protein.